The following is a 362-amino-acid chain: UDP-N-acetylglucosamine--N-acetylmuramyl-(pentapeptide) pyrophosphoryl-undecaprenol N-acetylglucosamine transferase (362 aa).

UDP-N-acetyl-alpha-D-glucosamine contacts are provided by residues 10 to 12 (TGG), Asn124, Ser194, Ile249, and Gln294.

The protein belongs to the glycosyltransferase 28 family. MurG subfamily.

The protein resides in the cell membrane. The enzyme catalyses Mur2Ac(oyl-L-Ala-gamma-D-Glu-L-Lys-D-Ala-D-Ala)-di-trans,octa-cis-undecaprenyl diphosphate + UDP-N-acetyl-alpha-D-glucosamine = beta-D-GlcNAc-(1-&gt;4)-Mur2Ac(oyl-L-Ala-gamma-D-Glu-L-Lys-D-Ala-D-Ala)-di-trans,octa-cis-undecaprenyl diphosphate + UDP + H(+). Its pathway is cell wall biogenesis; peptidoglycan biosynthesis. In terms of biological role, cell wall formation. Catalyzes the transfer of a GlcNAc subunit on undecaprenyl-pyrophosphoryl-MurNAc-pentapeptide (lipid intermediate I) to form undecaprenyl-pyrophosphoryl-MurNAc-(pentapeptide)GlcNAc (lipid intermediate II). In Pediococcus pentosaceus (strain ATCC 25745 / CCUG 21536 / LMG 10740 / 183-1w), this protein is UDP-N-acetylglucosamine--N-acetylmuramyl-(pentapeptide) pyrophosphoryl-undecaprenol N-acetylglucosamine transferase.